The chain runs to 357 residues: RNA 3'-terminal phosphate cyclase (357 aa).

Residues Gln-102 and 293-296 (HMGD) contribute to the ATP site. His-319 serves as the catalytic Tele-AMP-histidine intermediate.

This sequence belongs to the RNA 3'-terminal cyclase family. Type 1 subfamily.

It is found in the cytoplasm. The enzyme catalyses a 3'-end 3'-phospho-ribonucleotide-RNA + ATP = a 3'-end 2',3'-cyclophospho-ribonucleotide-RNA + AMP + diphosphate. Its function is as follows. Catalyzes the conversion of 3'-phosphate to a 2',3'-cyclic phosphodiester at the end of RNA. The mechanism of action of the enzyme occurs in 3 steps: (A) adenylation of the enzyme by ATP; (B) transfer of adenylate to an RNA-N3'P to produce RNA-N3'PP5'A; (C) and attack of the adjacent 2'-hydroxyl on the 3'-phosphorus in the diester linkage to produce the cyclic end product. The biological role of this enzyme is unknown but it is likely to function in some aspects of cellular RNA processing. In Staphylothermus marinus (strain ATCC 43588 / DSM 3639 / JCM 9404 / F1), this protein is RNA 3'-terminal phosphate cyclase.